The following is a 546-amino-acid chain: Probable Xaa-Pro aminopeptidase pepP (546 aa).

Asp-341, Asp-352, Glu-475, and Glu-515 together coordinate Mn(2+).

Belongs to the peptidase M24B family. It depends on Mn(2+) as a cofactor.

The enzyme catalyses Release of any N-terminal amino acid, including proline, that is linked to proline, even from a dipeptide or tripeptide.. Catalyzes the removal of a penultimate prolyl residue from the N-termini of peptides. In Sclerotinia sclerotiorum (strain ATCC 18683 / 1980 / Ss-1) (White mold), this protein is Probable Xaa-Pro aminopeptidase pepP (pepP).